The primary structure comprises 67 residues: Alpha-actitoxin-Ms11a-3 (67 aa).

The N-terminal stretch at 1-24 (MASKIFFVLAVFLVMSAVLPESFA) is a signal peptide. Intrachain disulfides connect Cys26/Cys41, Cys33/Cys46, and Cys40/Cys61. At Lys66 the chain carries Lysine amide.

It localises to the secreted. The protein resides in the nematocyst. Alpha-toxins act on postsynaptic membranes, they bind to the nicotinic acetylcholine receptors (nAChR) and thus inhibit them. This toxin shows inhibition against mouse alpha-1-beta-1-delta-epsilon (CHRNA1-CHRNB1-CHRND-CHRNE) (IC(50)=1215 nM), rat alpha-3-beta-4/CHRNA3-CHRNB4 (IC(50)=5.173 uM), rat alpha-7/CHRNA7 (IC(50)=4.786 uM), human alpha-7/CHRNA7 (IC(50)=8.869 uM), and rat alpha-9-alpha-10/CHRNA9-CHRNA10 (IC(50)=202 nM). Also competes with alpha-bungarotoxin for binding to orthosteric sites on muscle-type T.carlifornicus (IC(50)=256 nM) and human alpha-7/CHRNA7 nAChRs (IC(50)=19.81 uM). The sequence is that of Alpha-actitoxin-Ms11a-3 from Metridium senile (Brown sea anemone).